The primary structure comprises 371 residues: Histidinol-phosphate aminotransferase (371 aa).

At Lys-232 the chain carries N6-(pyridoxal phosphate)lysine.

The protein belongs to the class-II pyridoxal-phosphate-dependent aminotransferase family. Histidinol-phosphate aminotransferase subfamily. As to quaternary structure, homodimer. Requires pyridoxal 5'-phosphate as cofactor.

It carries out the reaction L-histidinol phosphate + 2-oxoglutarate = 3-(imidazol-4-yl)-2-oxopropyl phosphate + L-glutamate. It functions in the pathway amino-acid biosynthesis; L-histidine biosynthesis; L-histidine from 5-phospho-alpha-D-ribose 1-diphosphate: step 7/9. The protein is Histidinol-phosphate aminotransferase of Methylibium petroleiphilum (strain ATCC BAA-1232 / LMG 22953 / PM1).